Reading from the N-terminus, the 225-residue chain is UPF0758 protein Sbal223_0402 (225 aa).

The MPN domain maps to 102–224; the sequence is VLTNPDLTRD…IVSFAERGWI (123 aa). Zn(2+) is bound by residues H173, H175, and D186. A JAMM motif motif is present at residues 173–186; that stretch reads HNHPSGIAEPSQAD.

The protein belongs to the UPF0758 family.

This Shewanella baltica (strain OS223) protein is UPF0758 protein Sbal223_0402.